A 388-amino-acid chain; its full sequence is 8-amino-7-oxononanoate synthase (388 aa).

Residue Arg20 participates in substrate binding. 107-108 (GY) contacts pyridoxal 5'-phosphate. A substrate-binding site is contributed by His132. Pyridoxal 5'-phosphate is bound by residues Ser178, His206, and Thr237. Position 240 is an N6-(pyridoxal phosphate)lysine (Lys240). Thr356 contacts substrate.

This sequence belongs to the class-II pyridoxal-phosphate-dependent aminotransferase family. BioF subfamily. As to quaternary structure, homodimer. Pyridoxal 5'-phosphate is required as a cofactor.

The catalysed reaction is 6-carboxyhexanoyl-[ACP] + L-alanine + H(+) = (8S)-8-amino-7-oxononanoate + holo-[ACP] + CO2. It functions in the pathway cofactor biosynthesis; biotin biosynthesis. Catalyzes the decarboxylative condensation of pimeloyl-[acyl-carrier protein] and L-alanine to produce 8-amino-7-oxononanoate (AON), [acyl-carrier protein], and carbon dioxide. The polypeptide is 8-amino-7-oxononanoate synthase (Herminiimonas arsenicoxydans).